Consider the following 699-residue polypeptide: Fervidolysin (699 aa).

Residues M1–A21 form the signal peptide. A propeptide spanning residues N22 to N149 is cleaved from the precursor. Ca(2+) is bound at residue E157. A Peptidase S8 domain is found at L163 to L465. D190 acts as the Charge relay system in catalysis. D199 contacts Ca(2+). Catalysis depends on H228, which acts as the Charge relay system. Ca(2+) is bound by residues K239, D241, K243, and I245. Residue S409 is the Charge relay system of the active site.

This sequence belongs to the peptidase S8 family. Post-translationally, undergoes auto-proteolytic processing. Once cleaved, the propeptide can remain associated with the protease and blocks its activity. The physiological activation of fervidolysin is proposed to be achieved through the stepwise removal of the propeptide accomplished by several proteolytic cleavages that may not be autolytic.

It localises to the cell surface. With respect to regulation, is inhibited by phenylmethylsulfonyl fluoride and 3,4-dichloroisocoumarin. EDTA and iodoacetate (1 to 5 mM) have only little effect on the enzyme activity. In terms of biological role, protease able to degrade keratin into peptides. Is responsible for keratinolysis by F.pennivorans, which allows this bacterium to grow on native feathers. This is Fervidolysin from Fervidobacterium pennivorans.